Consider the following 432-residue polypeptide: Golgin subfamily A member 6-like protein 9 (432 aa).

The span at 1–11 (MWPQPRLPPHP) shows a compositional bias: pro residues. Disordered regions lie at residues 1–77 (MWPQ…YGEG) and 349–411 (KELE…AGGA). A compositionally biased stretch (polar residues) spans 51–62 (NGSSPDTFTSGG). A coiled-coil region spans residues 157-354 (SKMEQLQDET…EQQVKELEKS (198 aa)). Positions 349-362 (KELEKSGGAEEPRG) are enriched in basic and acidic residues. The span at 366–381 (AAAARPVAGAPVPQGA) shows a compositional bias: low complexity.

Belongs to the GOLGA6 family.

The polypeptide is Golgin subfamily A member 6-like protein 9 (Homo sapiens (Human)).